The chain runs to 254 residues: Triosephosphate isomerase (254 aa).

12 to 14 contacts substrate; the sequence is NWK. The active-site Electrophile is His-99. The Proton acceptor role is filled by Glu-169. Substrate is bound by residues Gly-175, Ser-214, and 235–236; that span reads GG.

Belongs to the triosephosphate isomerase family. In terms of assembly, homodimer.

The protein localises to the cytoplasm. The catalysed reaction is D-glyceraldehyde 3-phosphate = dihydroxyacetone phosphate. The protein operates within carbohydrate biosynthesis; gluconeogenesis. It participates in carbohydrate degradation; glycolysis; D-glyceraldehyde 3-phosphate from glycerone phosphate: step 1/1. Involved in the gluconeogenesis. Catalyzes stereospecifically the conversion of dihydroxyacetone phosphate (DHAP) to D-glyceraldehyde-3-phosphate (G3P). The protein is Triosephosphate isomerase of Xanthobacter autotrophicus (strain ATCC BAA-1158 / Py2).